Reading from the N-terminus, the 183-residue chain is Apo-citrate lyase phosphoribosyl-dephospho-CoA transferase (183 aa).

The protein belongs to the CitX family.

The enzyme catalyses apo-[citrate lyase ACP] + 2'-(5''-triphospho-alpha-D-ribosyl)-3'-dephospho-CoA = holo-[citrate lyase ACP] + diphosphate. In terms of biological role, transfers 2-(5''-triphosphoribosyl)-3'-dephosphocoenzyme-A on a serine residue to the apo-acyl carrier protein (gamma chain) of the citrate lyase to yield holo-acyl carrier protein. In Escherichia coli O6:K15:H31 (strain 536 / UPEC), this protein is Apo-citrate lyase phosphoribosyl-dephospho-CoA transferase.